We begin with the raw amino-acid sequence, 507 residues long: Maturase K (507 aa).

It belongs to the intron maturase 2 family. MatK subfamily.

It localises to the plastid. The protein localises to the chloroplast. Functionally, usually encoded in the trnK tRNA gene intron. Probably assists in splicing its own and other chloroplast group II introns. In Craterostigma plantagineum (Blue gem), this protein is Maturase K.